The following is a 375-amino-acid chain: SAP-like protein BP-73 (375 aa).

Disordered regions lie at residues 46–113 (PNNH…VPGE), 130–233 (RARG…VKFQ), and 257–315 (TLEN…PSLQ). The span at 59–70 (HQKGGSARRKSK) shows a compositional bias: basic residues. The segment covering 76–86 (DDSENIDEFDT) has biased composition (acidic residues). Polar residues predominate over residues 88 to 109 (IMSSKNGPPISLTSNSRPQATS). 2 stretches are compositionally biased toward basic and acidic residues: residues 134 to 152 (KGKE…ERGS) and 163 to 186 (HSVD…KRSN). The span at 187 to 197 (ESGNKQNSSIF) shows a compositional bias: polar residues. A compositionally biased stretch (acidic residues) spans 295 to 311 (DEPDASDTDEPSGEYDE). Residues 338–375 (DLSTLKVTELRELAKSRGIKGYSKMKKNDLVELLSNMA) form an interaction with WAXY region.

As to quaternary structure, binds to the DNA in the promoter region of WAXY containing the sequence 5'-ACGCACGCTAACGTGA-3'. As to expression, expressed in tissues with high cell division activities: in root tips, stem node, panicle, flower and immature seed. Weakly expressed in root and leaf.

In terms of biological role, may regulate cell proliferation and plant growth. The protein is SAP-like protein BP-73 (BP-73) of Oryza sativa subsp. japonica (Rice).